Consider the following 327-residue polypeptide: ATP-dependent 6-phosphofructokinase (327 aa).

Residues glycine 12, 73–74 (RL), and 103–106 (GDGS) each bind ATP. Residue aspartate 104 coordinates Mg(2+). 126–128 (TID) is a substrate binding site. The active-site Proton acceptor is the aspartate 128. Arginine 155 is a binding site for ADP. Residues arginine 163 and 170-172 (MGH) contribute to the substrate site. ADP contacts are provided by residues 186-188 (GAD) and 214-216 (KRS). Substrate-binding positions include glutamate 223, arginine 245, and 251 to 254 (HTQR).

The protein belongs to the phosphofructokinase type A (PFKA) family. ATP-dependent PFK group I subfamily. Prokaryotic clade 'B1' sub-subfamily. In terms of assembly, homotetramer. Requires Mg(2+) as cofactor.

Its subcellular location is the cytoplasm. It catalyses the reaction beta-D-fructose 6-phosphate + ATP = beta-D-fructose 1,6-bisphosphate + ADP + H(+). Its pathway is carbohydrate degradation; glycolysis; D-glyceraldehyde 3-phosphate and glycerone phosphate from D-glucose: step 3/4. Its activity is regulated as follows. Allosterically activated by ADP and other diphosphonucleosides, and allosterically inhibited by phosphoenolpyruvate. In terms of biological role, catalyzes the phosphorylation of D-fructose 6-phosphate to fructose 1,6-bisphosphate by ATP, the first committing step of glycolysis. The chain is ATP-dependent 6-phosphofructokinase from Spiroplasma citri.